Here is a 155-residue protein sequence, read N- to C-terminus: Putative pre-16S rRNA nuclease (155 aa).

It belongs to the YqgF nuclease family.

It is found in the cytoplasm. In terms of biological role, could be a nuclease involved in processing of the 5'-end of pre-16S rRNA. The chain is Putative pre-16S rRNA nuclease from Xanthomonas oryzae pv. oryzae (strain MAFF 311018).